A 214-amino-acid chain; its full sequence is Pyrrolidone-carboxylate peptidase (214 aa).

Active-site residues include E80, C143, and H166.

This sequence belongs to the peptidase C15 family. In terms of assembly, homotetramer.

It is found in the cytoplasm. It catalyses the reaction Release of an N-terminal pyroglutamyl group from a polypeptide, the second amino acid generally not being Pro.. Removes 5-oxoproline from various penultimate amino acid residues except L-proline. This chain is Pyrrolidone-carboxylate peptidase, found in Klebsiella pneumoniae (strain 342).